Here is a 208-residue protein sequence, read N- to C-terminus: Small ribosomal subunit protein uS4 (208 aa).

The region spanning 98–161 is the S4 RNA-binding domain; sequence QRLDNVVYRM…KNNPQIVRAI (64 aa).

The protein belongs to the universal ribosomal protein uS4 family. As to quaternary structure, part of the 30S ribosomal subunit. Contacts protein S5. The interaction surface between S4 and S5 is involved in control of translational fidelity.

In terms of biological role, one of the primary rRNA binding proteins, it binds directly to 16S rRNA where it nucleates assembly of the body of the 30S subunit. With S5 and S12 plays an important role in translational accuracy. The protein is Small ribosomal subunit protein uS4 of Campylobacter concisus (strain 13826).